An 88-amino-acid polypeptide reads, in one-letter code: Sec-independent protein translocase protein TatA (88 aa).

A helical transmembrane segment spans residues 1–21 (MGSLSPWHWVVLVVVVVLLFG). The segment covering 49 to 71 (ENQAQASALETPMQNPTVVQSQR) has biased composition (polar residues). Residues 49–88 (ENQAQASALETPMQNPTVVQSQRVVPPWSTEQDHTEARPA) form a disordered region. Over residues 79-88 (EQDHTEARPA) the composition is skewed to basic and acidic residues.

The protein belongs to the TatA/E family. In terms of assembly, the Tat system comprises two distinct complexes: a TatABC complex, containing multiple copies of TatA, TatB and TatC subunits, and a separate TatA complex, containing only TatA subunits. Substrates initially bind to the TatABC complex, which probably triggers association of the separate TatA complex to form the active translocon.

Its subcellular location is the cell membrane. In terms of biological role, part of the twin-arginine translocation (Tat) system that transports large folded proteins containing a characteristic twin-arginine motif in their signal peptide across membranes. TatA could form the protein-conducting channel of the Tat system. The protein is Sec-independent protein translocase protein TatA of Mycobacterium leprae (strain TN).